The chain runs to 207 residues: High frequency lysogenization protein HflD homolog (207 aa).

It belongs to the HflD family.

The protein localises to the cytoplasm. The protein resides in the cell inner membrane. This Pseudomonas fluorescens (strain ATCC BAA-477 / NRRL B-23932 / Pf-5) protein is High frequency lysogenization protein HflD homolog.